The chain runs to 761 residues: Semaphorin-4A (761 aa).

A signal peptide spans 1-32 (MALPALGLDPWSLLGLFLFQLLQLLLPTTTAG). Over 33–683 (GGGQGPMPRV…LAAQQSYWPH (651 aa)) the chain is Extracellular. The Sema domain maps to 36 to 494 (QGPMPRVRYY…FSGGVWRVPR (459 aa)). C113 and C124 are oxidised to a cystine. N120 and N135 each carry an N-linked (GlcNAc...) asparagine glycan. Intrachain disulfides connect C142/C151, C269/C379, and C293/C339. N496 carries an N-linked (GlcNAc...) asparagine glycan. The 53-residue stretch at 496–548 (NCSVYESCVDCVLARDPHCAWDPESRTCCLLSAPNLNSWKQDMERGNPEWACA) folds into the PSI domain. Cystine bridges form between C497–C514, C506–C523, and C580–C624. An Ig-like C2-type domain is found at 573–631 (NSILELPCPHLSALASYYWSHGPAAVPEASSTVYNGSLLLIVQDGVGGLYQCWATENGF). N607 is a glycosylation site (N-linked (GlcNAc...) asparagine). Residues 684–704 (FVTVTVLFALVLSGALIILVA) form a helical membrane-spanning segment. At 705-761 (SPLRALRARGKVQGCETLRPGEKAPLSREQHLQSPKECRTSASDVDADNNCLGTEVA) the chain is on the cytoplasmic side. A disordered region spans residues 722–749 (LRPGEKAPLSREQHLQSPKECRTSASDV). The segment covering 723–743 (RPGEKAPLSREQHLQSPKECR) has biased composition (basic and acidic residues).

The protein belongs to the semaphorin family. As to quaternary structure, interacts with PLXNB1, PLXNB2, PLXNB3, PLXND1 and TIMD2.

It is found in the cell membrane. Its function is as follows. Cell surface receptor for PLXNB1, PLXNB2, PLXNB3 and PLXND1 that plays an important role in cell-cell signaling. Regulates glutamatergic and GABAergic synapse development. Promotes the development of inhibitory synapses in a PLXNB1-dependent manner and promotes the development of excitatory synapses in a PLXNB2-dependent manner. Plays a role in priming antigen-specific T-cells, promotes differentiation of Th1 T-helper cells, and thereby contributes to adaptive immunity. Promotes phosphorylation of TIMD2. Inhibits angiogenesis. Promotes axon growth cone collapse. Inhibits axonal extension by providing local signals to specify territories inaccessible for growing axons. This chain is Semaphorin-4A (SEMA4A), found in Homo sapiens (Human).